The following is a 363-amino-acid chain: Ribosome-binding ATPase YchF (363 aa).

Residues 3 to 256 (FKCGIVGLPN…LDDEEKVEFL (254 aa)) enclose the OBG-type G domain. ATP is bound at residue 12 to 17 (NVGKST). The Mg(2+) site is built by S16 and T36. The TGS domain occupies 278–361 (NLQTYFTAGV…QDGDVMHFRF (84 aa)).

Mg(2+) is required as a cofactor.

In terms of biological role, ATPase that binds to both the 70S ribosome and the 50S ribosomal subunit in a nucleotide-independent manner. Does not hydrolyze GTP. This chain is Ribosome-binding ATPase YchF, found in Haemophilus influenzae (strain ATCC 51907 / DSM 11121 / KW20 / Rd).